The sequence spans 898 residues: Tight junction protein ZO-3 (898 aa).

Residues 11-93 (TATLCRDPRR…LANITVKRPR (83 aa)) enclose the PDZ 1 domain. The disordered stretch occupies residues 98 to 165 (PATKAGTSGR…SPGGNSEANG (68 aa)). 5 positions are modified to phosphoserine: Ser-128, Ser-156, Ser-161, Ser-195, and Ser-313. In terms of domain architecture, PDZ 2 spans 187 to 264 (SVLVRRTESE…KLTLLVLRDR (78 aa)). The tract at residues 295 to 368 (LSQAVPSHVP…QSAEDRGYSP (74 aa)) is disordered. Basic and acidic residues predominate over residues 312–349 (RSLDSDGTDSPRDSPPLRRENSLDSRTISEPDAPRHSS). Thr-319 bears the Phosphothreonine mark. Phosphoserine is present on residues Ser-321 and Ser-360. Residues 369 to 435 (DSRVVRFHKG…LTREEAVQFL (67 aa)) enclose the PDZ 3 domain. The SH3 domain occupies 464 to 538 (GDSFYIRTHF…PNQSRAEQLA (75 aa)). The Guanylate kinase-like domain occupies 569 to 750 (LRRGAKKSTQ…WYQELKAVVR (182 aa)). Residue Ser-580 is modified to Phosphoserine. The interval 759–898 (TAEDQLDNSS…GYDWGPATDL (140 aa)) is disordered. A compositionally biased stretch (acidic residues) spans 762–772 (DQLDNSSEDNL). Positions 780–790 (ADSSADLSCDS) are enriched in low complexity. A compositionally biased stretch (acidic residues) spans 796 to 814 (YETDGEGYTDGEGYTDVDE). Positions 831-841 (EEPRSPRDHGR) are enriched in basic and acidic residues. Phosphoserine occurs at positions 835, 884, and 885.

The protein belongs to the MAGUK family. As to quaternary structure, heterodimer with TJP1. Interacts with UBN1. Interacts with occludin OCLN and claudins. Interacts with PATJ. Interacts with FASLG. Interacts with CCND1. Post-translationally, phosphorylated.

It localises to the cell membrane. It is found in the cell junction. Its subcellular location is the tight junction. The protein localises to the nucleus. Functionally, TJP1, TJP2, and TJP3 are closely related scaffolding proteins that link tight junction (TJ) transmembrane proteins such as claudins, junctional adhesion molecules, and occludin to the actin cytoskeleton. The tight junction acts to limit movement of substances through the paracellular space and as a boundary between the compositionally distinct apical and basolateral plasma membrane domains of epithelial and endothelial cells. Binds and recruits PATJ to tight junctions where it connects and stabilizes apical and lateral components of tight junctions. Promotes cell-cycle progression through the sequestration of cyclin D1 (CCND1) at tight junctions during mitosis which prevents CCND1 degradation during M-phase and enables S-phase transition. With TJP1 and TJP2, participates in the junctional retention and stability of the transcription factor DBPA, but is not involved in its shuttling to the nucleus. Contrary to TJP2, TJP3 is dispensable for individual viability, embryonic development, epithelial differentiation, and the establishment of TJs, at least in the laboratory environment. The polypeptide is Tight junction protein ZO-3 (TJP3) (Canis lupus familiaris (Dog)).